The following is a 228-amino-acid chain: UPF0173 metal-dependent hydrolase lwe1590 (228 aa).

Belongs to the UPF0173 family.

This Listeria welshimeri serovar 6b (strain ATCC 35897 / DSM 20650 / CCUG 15529 / CIP 8149 / NCTC 11857 / SLCC 5334 / V8) protein is UPF0173 metal-dependent hydrolase lwe1590.